The sequence spans 1895 residues: Diacylglycerol kinase eta (1895 aa).

Residues 1 to 10 (MAHLKLDTLH) show a composition bias toward basic and acidic residues. The tract at residues 1–37 (MAHLKLDTLHVQRSPRGSRRSSPSSGRSSACSSGSIS) is disordered. Residues 20–37 (RSSPSSGRSSACSSGSIS) show a composition bias toward low complexity. Positions 82–175 (AIIKEGFLLK…WLGSLKTATA (94 aa)) constitute a PH domain. 2 Phorbol-ester/DAG-type zinc fingers span residues 195–245 (HHHW…IANC) and 267–318 (PHQW…AVAC). Residues 349–485 (GNFSPLLVFV…DRWSIMVFEK (137 aa)) form the DAGKc domain. Disordered stretches follow at residues 781 to 801 (ANIDDAGNRLSPCSDAGENTP), 1012 to 1053 (TTLC…MARL), 1113 to 1137 (QHRGGDNDSDYPEHEQTPTNKGANL), and 1172 to 1191 (PNTILTTSTSPTKKSGHGQD). Residues 1113–1128 (QHRGGDNDSDYPEHEQ) are compositionally biased toward basic and acidic residues. Positions 1172 to 1184 (PNTILTTSTSPTK) are enriched in polar residues. The region spanning 1832–1895 (WSVNEVVTWL…LQAIKDLSEN (64 aa)) is the SAM domain.

The protein belongs to the eukaryotic diacylglycerol kinase family.

It localises to the cytoplasm. The enzyme catalyses a 1,2-diacyl-sn-glycerol + ATP = a 1,2-diacyl-sn-glycero-3-phosphate + ADP + H(+). Functionally, phosphorylates diacylglycerol (DAG) to generate phosphatidic acid (PA). This Drosophila melanogaster (Fruit fly) protein is Diacylglycerol kinase eta.